The primary structure comprises 597 residues: Blastula protease 10 (597 aa).

A signal peptide spans 1–16 (MKLILFLSGLVSLVLC). A propeptide spans 17–93 (TLAAPTGDQK…DEMTGRKKRK (77 aa)) (activation peptide). The tract at residues 24 to 67 (DQKEIHTETPPPKKPSETTTPGALKTPQPEPKDEEPTPGAFQGD) is disordered. The 202-residue stretch at 93 to 294 (KATIYESQRW…ELANLIYECD (202 aa)) folds into the Peptidase M12A domain. Disulfide bonds link cysteine 134/cysteine 293, cysteine 162/cysteine 182, cysteine 299/cysteine 315, cysteine 305/cysteine 317, cysteine 319/cysteine 328, cysteine 339/cysteine 365, cysteine 392/cysteine 412, cysteine 484/cysteine 510, and cysteine 537/cysteine 557. Histidine 190 contributes to the Zn(2+) binding site. Glutamate 191 is a catalytic residue. 2 residues coordinate Zn(2+): histidine 194 and histidine 200. An EGF-like domain is found at 295–329 (DIEDCAGANECLNGGYHDTECNCVCPSGYNGDLCE). CUB domains follow at residues 339-449 (CSER…YRIV) and 484-595 (CGGS…YRAI).

It depends on Zn(2+) as a cofactor.

It localises to the cytoplasm. The protein localises to the perinuclear region. The protein resides in the cell cortex. It is found in the secreted. Its subcellular location is the extracellular space. Could be involved in the differentiation of ectodermal lineages and subsequent patterning of the embryo. This is Blastula protease 10 (BP10) from Paracentrotus lividus (Common sea urchin).